The primary structure comprises 184 residues: Large ribosomal subunit protein uL6 (184 aa).

This sequence belongs to the universal ribosomal protein uL6 family. Part of the 50S ribosomal subunit.

Its function is as follows. This protein binds to the 23S rRNA, and is important in its secondary structure. It is located near the subunit interface in the base of the L7/L12 stalk, and near the tRNA binding site of the peptidyltransferase center. In Thermosipho africanus (strain TCF52B), this protein is Large ribosomal subunit protein uL6.